A 66-amino-acid chain; its full sequence is Large ribosomal subunit protein bL35 (66 aa).

Composition is skewed to basic residues over residues 1 to 15 (MPKL…KRFK) and 27 to 40 (AGKR…TKKQ). Positions 1–40 (MPKLKTKSGAKKRFKVTGTGKVMSAHAGKRHGMIKRTKKQ) are disordered.

This sequence belongs to the bacterial ribosomal protein bL35 family.

In Rhodopseudomonas palustris (strain BisA53), this protein is Large ribosomal subunit protein bL35.